Here is a 588-residue protein sequence, read N- to C-terminus: Ufm1-specific protease (588 aa).

Catalysis depends on residues cysteine 420, aspartate 544, and histidine 546.

This sequence belongs to the peptidase C78 family. As to quaternary structure, interacts with odr-4.

It localises to the endoplasmic reticulum membrane. The protein resides in the cytoplasm. The protein localises to the perinuclear region. Functionally, thiol protease which recognizes and hydrolyzes the peptide bond at the C-terminal Gly of ufm-1, a ubiquitin-like modifier protein bound to a number of target proteins. Required, with oct-4, for the localization of a subset of 7 transmembrane domain odorant receptors, including odr-10, to the cilia of olfactory neurons AWA and AWC. Operates in aggregation behavior, and responses to oxygen levels. This is Ufm1-specific protease from Caenorhabditis briggsae.